The sequence spans 308 residues: Ribosomal RNA small subunit methyltransferase H (308 aa).

S-adenosyl-L-methionine is bound by residues G31–H33, D51, F75, D97, and Q104.

This sequence belongs to the methyltransferase superfamily. RsmH family.

The protein localises to the cytoplasm. It catalyses the reaction cytidine(1402) in 16S rRNA + S-adenosyl-L-methionine = N(4)-methylcytidine(1402) in 16S rRNA + S-adenosyl-L-homocysteine + H(+). Specifically methylates the N4 position of cytidine in position 1402 (C1402) of 16S rRNA. The chain is Ribosomal RNA small subunit methyltransferase H from Tolumonas auensis (strain DSM 9187 / NBRC 110442 / TA 4).